A 135-amino-acid chain; its full sequence is Small ribosomal subunit protein uS12 (135 aa).

Position 89 is a 3-methylthioaspartic acid (D89). A disordered region spans residues R114–K135. The span at A124–K135 shows a compositional bias: low complexity.

It belongs to the universal ribosomal protein uS12 family. Part of the 30S ribosomal subunit. Contacts proteins S8 and S17. May interact with IF1 in the 30S initiation complex.

Functionally, with S4 and S5 plays an important role in translational accuracy. Interacts with and stabilizes bases of the 16S rRNA that are involved in tRNA selection in the A site and with the mRNA backbone. Located at the interface of the 30S and 50S subunits, it traverses the body of the 30S subunit contacting proteins on the other side and probably holding the rRNA structure together. The combined cluster of proteins S8, S12 and S17 appears to hold together the shoulder and platform of the 30S subunit. This chain is Small ribosomal subunit protein uS12, found in Amoebophilus asiaticus (strain 5a2).